The chain runs to 202 residues: Probable pathogenesis-related protein CaO19.2336 (202 aa).

Residues 1–20 (MKTLLFIYLQLLLLLSIIIG) form the signal peptide. N-linked (GlcNAc...) asparagine glycosylation is found at Asn-58 and Asn-152. One can recognise an SCP domain in the interval 66-179 (LKEHNNKRKL…LNALYIVCSY (114 aa)).

The protein belongs to the CRISP family.

It is found in the secreted. Secreted protein that acts as a virulence factor during infections. The chain is Probable pathogenesis-related protein CaO19.2336 from Candida albicans (strain SC5314 / ATCC MYA-2876) (Yeast).